Here is a 366-residue protein sequence, read N- to C-terminus: UDP-N-acetylglucosamine--N-acetylmuramyl-(pentapeptide) pyrophosphoryl-undecaprenol N-acetylglucosamine transferase (366 aa).

UDP-N-acetyl-alpha-D-glucosamine contacts are provided by residues 10-12 (TGG), N124, R165, S192, I247, and Q292.

Belongs to the glycosyltransferase 28 family. MurG subfamily.

It is found in the cell inner membrane. The enzyme catalyses di-trans,octa-cis-undecaprenyl diphospho-N-acetyl-alpha-D-muramoyl-L-alanyl-D-glutamyl-meso-2,6-diaminopimeloyl-D-alanyl-D-alanine + UDP-N-acetyl-alpha-D-glucosamine = di-trans,octa-cis-undecaprenyl diphospho-[N-acetyl-alpha-D-glucosaminyl-(1-&gt;4)]-N-acetyl-alpha-D-muramoyl-L-alanyl-D-glutamyl-meso-2,6-diaminopimeloyl-D-alanyl-D-alanine + UDP + H(+). The protein operates within cell wall biogenesis; peptidoglycan biosynthesis. Its function is as follows. Cell wall formation. Catalyzes the transfer of a GlcNAc subunit on undecaprenyl-pyrophosphoryl-MurNAc-pentapeptide (lipid intermediate I) to form undecaprenyl-pyrophosphoryl-MurNAc-(pentapeptide)GlcNAc (lipid intermediate II). This chain is UDP-N-acetylglucosamine--N-acetylmuramyl-(pentapeptide) pyrophosphoryl-undecaprenol N-acetylglucosamine transferase, found in Geotalea daltonii (strain DSM 22248 / JCM 15807 / FRC-32) (Geobacter daltonii).